The sequence spans 140 residues: uncharacterized protein (140 aa).

14 repeat units span residues 1–10, 11–20, 21–30, 31–40, 41–50, 51–60, 61–70, 71–80, 81–90, 91–100, 101–110, 111–120, 121–130, and 131–140. Positions 1-140 are 14 X 10 AA tandem repeats of [MT]-F-[AG]-R-L-[CS]-P-V-[SI]-[ET]; sequence MFARLCPVSE…MFGRLCPVIT (140 aa).

This is an uncharacterized protein from Homo sapiens (Human).